We begin with the raw amino-acid sequence, 161 residues long: UPF0178 protein BruAb1_1955 (161 aa).

It belongs to the UPF0178 family.

This is UPF0178 protein BruAb1_1955 from Brucella abortus biovar 1 (strain 9-941).